Reading from the N-terminus, the 981-residue chain is Rab3 GTPase-activating protein catalytic subunit (981 aa).

A phosphoserine mark is found at Ser-83, Ser-379, Ser-537, Ser-579, Ser-581, and Ser-590. The disordered stretch occupies residues 592-613 (TEELKGNGQESGKKGGPKEMAN). Ser-664 carries the phosphoserine modification. At Thr-908 the chain carries Phosphothreonine. The interval 908 to 937 (TPPEEELKRMGSPEERRQNSVSDFPPPAGR) is disordered. Basic and acidic residues predominate over residues 912–925 (EELKRMGSPEERRQ).

Belongs to the Rab3-GAP catalytic subunit family. As to quaternary structure, the Rab3 GTPase-activating complex is a heterodimer composed of RAB3GAP1 and RAB3GAP2. The Rab3 GTPase-activating complex interacts with DMXL2. Interacts with LMAN1. In terms of tissue distribution, ubiquitous.

It localises to the cytoplasm. It is found in the endoplasmic reticulum. Its subcellular location is the golgi apparatus. The protein localises to the cis-Golgi network. Functionally, catalytic subunit of the Rab3 GTPase-activating (Rab3GAP) complex composed of RAB3GAP1 and RAB3GAP2, which has GTPase-activating protein (GAP) activity towards various Rab3 subfamily members (RAB3A, RAB3B, RAB3C and RAB3D), RAB5A and RAB43, and guanine nucleotide exchange factor (GEF) activity towards RAB18. As part of the Rab3GAP complex, acts as a GAP for Rab3 proteins by converting active RAB3-GTP to the inactive form RAB3-GDP. Rab3 proteins are involved in regulated exocytosis of neurotransmitters and hormones. The Rab3GAP complex, acts as a GEF for RAB18 by promoting the conversion of inactive RAB18-GDP to the active form RAB18-GTP. Recruits and stabilizes RAB18 at the cis-Golgi membrane in fibroblasts where RAB18 is most likely activated. Also involved in RAB18 recruitment at the endoplasmic reticulum (ER) membrane where it maintains proper ER structure. Required for normal eye and brain development. May participate in neurodevelopmental processes such as proliferation, migration and differentiation before synapse formation, and non-synaptic vesicular release of neurotransmitters. This Homo sapiens (Human) protein is Rab3 GTPase-activating protein catalytic subunit.